Reading from the N-terminus, the 72-residue chain is MAQHSKYSDAQLSAIVNDMIAVLEKHKAPVDLLLIALGNMASNLLTTSVPQTQREALAQAFSNSLINAVKTR.

The protein belongs to the UPF0352 family.

In Haemophilus influenzae (strain PittGG), this protein is UPF0352 protein CGSHiGG_07710.